A 122-amino-acid polypeptide reads, in one-letter code: Large ribosomal subunit protein uL14c (122 aa).

The protein belongs to the universal ribosomal protein uL14 family. Part of the 50S ribosomal subunit.

The protein localises to the plastid. It localises to the chloroplast. In terms of biological role, binds to 23S rRNA. This Zygnema circumcarinatum (Green alga) protein is Large ribosomal subunit protein uL14c.